The sequence spans 523 residues: MSRQFTCKSGAAAKGGFSGCSAVLSGGSSSSFRAGSKGLSGGFGSRSLYSLGGVRSLNVASGSGKSGGYGFGRGRASGFAGSMFGSVALGPVCPTVCPPGGIHQVTVNESLLAPLNVELDPEIQKVRAQEREQIKALNNKFASFIDKVRFLEQQNQVLETKWELLQQLDLNNCKNNLEPILEGYISNLRKQLETLSGDRVRLDSELRNVRDVVEDYKKRYEEEINKRTAAENEFVLLKKDVDAAYANKVELQAKVESMDQEIKFFRCLFEAEITQIQSHISDMSVILSMDNNRNLDLDSIIDEVRTQYEEIALKSKAEAEALYQTKFQELQLAAGRHGDDLKNTKNEISELTRLIQRIRSEIENVKKQASNLETAIADAEQRGDNALKDARAKLDELEGALHQAKEELARMLREYQELMSLKLALDMEIATYRKLLESEECRMSGEFPSPVSISIISSTSGGSVYGFRPSMVSGGYVANSSNCISGVCSVRGGEGRSRGSANDYKDTLGKGSSLSAPSKKTSR.

Residues 1-129 (MSRQFTCKSG…DPEIQKVRAQ (129 aa)) form a head region. The coil 1A stretch occupies residues 130-165 (EREQIKALNNKFASFIDKVRFLEQQNQVLETKWELL). In terms of domain architecture, IF rod spans 130–443 (EREQIKALNN…KLLESEECRM (314 aa)). Positions 166-184 (QQLDLNNCKNNLEPILEGY) are linker 1. Residues 185–276 (ISNLRKQLET…CLFEAEITQI (92 aa)) are coil 1B. The segment at 277–300 (QSHISDMSVILSMDNNRNLDLDSI) is linker 12. Positions 301-439 (IDEVRTQYEE…ATYRKLLESE (139 aa)) are coil 2. The tail stretch occupies residues 440–523 (ECRMSGEFPS…LSAPSKKTSR (84 aa)). The disordered stretch occupies residues 492-523 (GGEGRSRGSANDYKDTLGKGSSLSAPSKKTSR). Over residues 493 to 508 (GEGRSRGSANDYKDTL) the composition is skewed to basic and acidic residues. The segment covering 510-523 (KGSSLSAPSKKTSR) has biased composition (polar residues).

It belongs to the intermediate filament family. Heterodimer of a type I and a type II keratin. Associates with KRT16 and/or KRT17. As to expression, highly expressed in hair follicles from scalp. Specifically expressed in the inner root sheath (IRS) of the hair follicle. Present in the all 3 IRS layers: the cuticle, the Henle and the Huxley layers. Also detected in the pseudopods of specialized Huxley cells, termed Fluegelzellen, along the area of differentiated Henle cells (at protein level).

Its subcellular location is the cytoplasm. It is found in the cytoskeleton. In terms of biological role, plays a central role in hair formation. Essential component of keratin intermediate filaments in the inner root sheath (IRS) of the hair follicle. The chain is Keratin, type II cytoskeletal 71 (KRT71) from Homo sapiens (Human).